The following is a 269-amino-acid chain: Tryptophan synthase alpha chain (269 aa).

Catalysis depends on proton acceptor residues glutamate 49 and aspartate 60.

This sequence belongs to the TrpA family. In terms of assembly, tetramer of two alpha and two beta chains.

It carries out the reaction (1S,2R)-1-C-(indol-3-yl)glycerol 3-phosphate + L-serine = D-glyceraldehyde 3-phosphate + L-tryptophan + H2O. It participates in amino-acid biosynthesis; L-tryptophan biosynthesis; L-tryptophan from chorismate: step 5/5. Its function is as follows. The alpha subunit is responsible for the aldol cleavage of indoleglycerol phosphate to indole and glyceraldehyde 3-phosphate. This Paramagnetospirillum magneticum (strain ATCC 700264 / AMB-1) (Magnetospirillum magneticum) protein is Tryptophan synthase alpha chain.